A 377-amino-acid chain; its full sequence is Carboxynorspermidine/carboxyspermidine decarboxylase (377 aa).

Lysine 41 carries the N6-(pyridoxal phosphate)lysine modification. Residues glutamate 238 and aspartate 274 each contribute to the substrate site.

This sequence belongs to the Orn/Lys/Arg decarboxylase class-II family. NspC subfamily. In terms of assembly, homodimer. Requires pyridoxal 5'-phosphate as cofactor.

The protein resides in the cytoplasm. It carries out the reaction carboxynorspermidine + H(+) = norspermidine + CO2. The enzyme catalyses carboxyspermidine + H(+) = spermidine + CO2. Catalyzes the decarboxylation of carboxynorspermidine and carboxyspermidine. Carboxynorspermidine is decarboxylated 20-fold more efficiently than carboxyspermidine. Exhibits some activity with L-ornithine, but shows no activity with L-arginine, L-lysine or meso-diaminopimelate. The protein is Carboxynorspermidine/carboxyspermidine decarboxylase of Vibrio vulnificus (strain CMCP6).